The sequence spans 348 residues: Major outer membrane protein P.IB (348 aa).

A signal peptide spans 1-19 (MKKSLIALTLAALPVAAMA).

It belongs to the Gram-negative porin family. Homotrimer.

It is found in the cell outer membrane. Its function is as follows. Serves as a slightly cation selective porin. Major antigen on the gonococcal cell surface and it may have pathogenic properties in addition to its porin activity. In Neisseria gonorrhoeae, this protein is Major outer membrane protein P.IB (porB).